Here is a 491-residue protein sequence, read N- to C-terminus: Cytochrome P450 2F5 (491 aa).

Residue Cys436 participates in heme binding.

It belongs to the cytochrome P450 family. It depends on heme as a cofactor.

Its subcellular location is the endoplasmic reticulum membrane. It is found in the microsome membrane. It catalyses the reaction an organic molecule + reduced [NADPH--hemoprotein reductase] + O2 = an alcohol + oxidized [NADPH--hemoprotein reductase] + H2O + H(+). Cytochromes P450 are a group of heme-thiolate monooxygenases. In liver microsomes, this enzyme is involved in an NADPH-dependent electron transport pathway. It oxidizes a variety of structurally unrelated compounds, including steroids, fatty acids, and xenobiotics. This chain is Cytochrome P450 2F5 (CYP2F5), found in Gorilla gorilla gorilla (Western lowland gorilla).